The primary structure comprises 153 residues: Endoribonuclease YbeY (153 aa).

Positions 114, 118, and 124 each coordinate Zn(2+).

Belongs to the endoribonuclease YbeY family. Zn(2+) is required as a cofactor.

It is found in the cytoplasm. Functionally, single strand-specific metallo-endoribonuclease involved in late-stage 70S ribosome quality control and in maturation of the 3' terminus of the 16S rRNA. The polypeptide is Endoribonuclease YbeY (Shewanella baltica (strain OS223)).